A 327-amino-acid chain; its full sequence is Putative D-threonate 4-phosphate dehydrogenase (327 aa).

The substrate site is built by His-139 and Thr-140. Residues His-169, His-213, and His-268 each contribute to the a divalent metal cation site. Substrate contacts are provided by Lys-276, Asn-285, and Arg-294.

Belongs to the PdxA family. PdxA2 subfamily. Homodimer. A divalent metal cation is required as a cofactor.

It catalyses the reaction 4-O-phospho-D-threonate + NAD(+) = dihydroxyacetone phosphate + CO2 + NADH. Its function is as follows. Catalyzes the NAD-dependent oxidation and subsequent decarboxylation of D-threonate 4-phosphate to produce dihydroxyacetone phosphate (DHAP). This is Putative D-threonate 4-phosphate dehydrogenase from Salmonella typhi.